A 359-amino-acid polypeptide reads, in one-letter code: Diacyltrehalose acyltransferase Chp2 (359 aa).

A helical membrane pass occupies residues 4–24; the sequence is VIAGAFAVWLVGWAGGFGTAI. The PE-PPE domain occupies 79–316; that stretch reads PNAKHDLIDY…VLQPQIDAAY (238 aa).

The protein belongs to the mycobacterial PPE family.

It is found in the cell inner membrane. Its activity is regulated as follows. Activity is probably potentiated by the DAT/PAT transporter MmpL10. Inhibited by the lipase inhibitor tetrahydrolipstatin (THL). Its function is as follows. Involved in the final steps of polyacyltrehalose (PAT) biosynthesis. Catalyzes the transfer of three mycolipenoyl groups onto diacyltrehalose (DAT) to form PAT. This is Diacyltrehalose acyltransferase Chp2 from Mycobacterium tuberculosis (strain ATCC 25618 / H37Rv).